A 239-amino-acid polypeptide reads, in one-letter code: MGKPKFYDFCVHAVPDGDSTAQEQVSLGRHFGFSGIALANHSDRLPDRKPILPFIEGFEVFRGIELVEENPSKLHSLIGKFRNSMDVLIVHGGSEAVNRAALENPRVDILNHPAFDRSSGLNQVLAKAAAENGVAIGIILRPLLHSRGSRRIRLLSDLKSNLELARKYDVSLVLCSDAMSCFDLRSPMEMLALAEVCGLEEDEALEAISTVPEKIIAKNRPGPGYIKKGIEVLEGEDLF.

Belongs to the eukaryotic/archaeal RNase P protein component 3 family. As to quaternary structure, consists of a catalytic RNA component and at least 4-5 protein subunits.

The protein localises to the cytoplasm. It catalyses the reaction Endonucleolytic cleavage of RNA, removing 5'-extranucleotides from tRNA precursor.. Part of ribonuclease P, a protein complex that generates mature tRNA molecules by cleaving their 5'-ends. The chain is Ribonuclease P protein component 3 from Methanosarcina acetivorans (strain ATCC 35395 / DSM 2834 / JCM 12185 / C2A).